We begin with the raw amino-acid sequence, 310 residues long: MNLYDLLELPTTASIKEIKIAYKRLAKRYHPDVNKLGSQTFVEINNAYSILSDPNQKEKYDSMLKVNDFQNRIKNLDISVRWHENFMEELELRKNWEFDFFSSDEDFFYSPFTKNKYASFLDKDVSLAFFQLYSKGKIDHQLEKSLLKRRDVKEACQQNKNFIEVIKEQYNYFGWIEAKRYFNINVELELTQREIRDRDVVNLPLKIKVINNDFPNQLWYEIYKNYSFRLSWDIKNGEIAEFFNKGNRALGWKGDLIVRMKVVNKVNKRLRIFSSFFENDKSKLWFLVPNDKQSNPNKGVFNYKTQHFID.

Positions 1–66 (MNLYDLLELP…KEKYDSMLKV (66 aa)) constitute a J domain.

The chain is DnaJ-like protein MG002 from Mycoplasma genitalium (strain ATCC 33530 / DSM 19775 / NCTC 10195 / G37) (Mycoplasmoides genitalium).